The chain runs to 77 residues: Liver-expressed antimicrobial peptide 2 (77 aa).

An N-terminal signal peptide occupies residues methionine 1–glycine 22. The propeptide occupies serine 23–arginine 37. 2 disulfides stabilise this stretch: cysteine 54–cysteine 65 and cysteine 60–cysteine 70.

The protein belongs to the LEAP2 family.

Its subcellular location is the secreted. Has an antimicrobial activity. In Bos taurus (Bovine), this protein is Liver-expressed antimicrobial peptide 2 (LEAP2).